A 214-amino-acid chain; its full sequence is Urease accessory protein UreG 2 (214 aa).

22 to 29 contributes to the GTP binding site; the sequence is GPVGSGKT.

This sequence belongs to the SIMIBI class G3E GTPase family. UreG subfamily. As to quaternary structure, homodimer. UreD, UreF and UreG form a complex that acts as a GTP-hydrolysis-dependent molecular chaperone, activating the urease apoprotein by helping to assemble the nickel containing metallocenter of UreC. The UreE protein probably delivers the nickel.

It localises to the cytoplasm. Facilitates the functional incorporation of the urease nickel metallocenter. This process requires GTP hydrolysis, probably effectuated by UreG. This chain is Urease accessory protein UreG 2, found in Bradyrhizobium sp. (strain BTAi1 / ATCC BAA-1182).